We begin with the raw amino-acid sequence, 64 residues long: Large ribosomal subunit protein bL35 (64 aa).

Residues 19-44 (TGKLKASRPGRRHKLTGKTPKRKRQL) form a disordered region. The span at 23–44 (KASRPGRRHKLTGKTPKRKRQL) shows a compositional bias: basic residues.

Belongs to the bacterial ribosomal protein bL35 family.

This is Large ribosomal subunit protein bL35 from Protochlamydia amoebophila (strain UWE25).